Here is a 377-residue protein sequence, read N- to C-terminus: 4-hydroxy-3-methylbut-2-en-1-yl diphosphate synthase (flavodoxin) (377 aa).

[4Fe-4S] cluster-binding residues include Cys-270, Cys-273, Cys-305, and Glu-312.

It belongs to the IspG family. It depends on [4Fe-4S] cluster as a cofactor.

The catalysed reaction is (2E)-4-hydroxy-3-methylbut-2-enyl diphosphate + oxidized [flavodoxin] + H2O + 2 H(+) = 2-C-methyl-D-erythritol 2,4-cyclic diphosphate + reduced [flavodoxin]. Its pathway is isoprenoid biosynthesis; isopentenyl diphosphate biosynthesis via DXP pathway; isopentenyl diphosphate from 1-deoxy-D-xylulose 5-phosphate: step 5/6. Its function is as follows. Converts 2C-methyl-D-erythritol 2,4-cyclodiphosphate (ME-2,4cPP) into 1-hydroxy-2-methyl-2-(E)-butenyl 4-diphosphate. This is 4-hydroxy-3-methylbut-2-en-1-yl diphosphate synthase (flavodoxin) from Bacillus subtilis (strain 168).